A 3483-amino-acid chain; its full sequence is Nonribosomal peptide synthetase Ao415 (3483 aa).

Residues threonine 281–valine 669 form an adenylation 1 region. Residues glutamate 775–lysine 851 form the Carrier 1 domain. Serine 812 bears the O-(pantetheine 4'-phosphoryl)serine mark. Residues alanine 886–glutamine 1297 form a condensation 1 region. Positions threonine 1363 to valine 1758 are adenylation 2. The 77-residue stretch at glutamate 1865–asparagine 1941 folds into the Carrier 2 domain. Serine 1901 carries the O-(pantetheine 4'-phosphoryl)serine modification. A condensation 2 region spans residues isoleucine 1981 to alanine 2379. Residues threonine 2412–lysine 2485 enclose the Carrier 3 domain. The residue at position 2446 (serine 2446) is an O-(pantetheine 4'-phosphoryl)serine. The segment at glutamate 2520–leucine 2917 is condensation 3. In terms of domain architecture, Carrier 4 spans aspartate 2954–glutamine 3030. At serine 2991 the chain carries O-(pantetheine 4'-phosphoryl)serine. A condensation 4 region spans residues serine 3084–threonine 3368.

It belongs to the NRP synthetase family.

It functions in the pathway siderophore biosynthesis. Functionally, nonribosomal peptide synthetase; part of the gene cluster that mediates the biosynthesis of desferriferrichrome that chelates Fe(3+) to form ferrichrome. Fe(3+) is a key factor for induction of trap formation and the fungus uses the iron chelating desferriferrichrome to sequester Fe(3+) to inhibit trap formation and increase nematicidal activity. The biosynthesis of desferriferrichrome requires the action of the L-ornithine N(5)-oxygenase (LOO) Ao414 that hydroxylates L-ornithine at N(5), resulting in the formation of N(5)-hydroxyl-L-ornithine, which is subsequently N-acetylated to yield N(5)-acetyl-N(5)-hydroxy-L-ornithine (L-AHO). L-AHO harbors one hydroxamate moiety, which is the key core responsible for chelating iron. Then, L-AHO is further condensated with glycines to form desferriferrichrome through the NRPS protein Ao415. This Arthrobotrys oligospora (strain ATCC 24927 / CBS 115.81 / DSM 1491) (Nematode-trapping fungus) protein is Nonribosomal peptide synthetase Ao415.